Here is a 91-residue protein sequence, read N- to C-terminus: Acyl carrier protein AsbD (91 aa).

In terms of domain architecture, Carrier spans 4 to 82; that stretch reads EALKNAVLKI…SLLDFMEELQ (79 aa). Position 40 is an O-(pantetheine 4'-phosphoryl)serine (serine 40).

It belongs to the acyl carrier protein (ACP) family. Post-translationally, activated by the transfer of a 4'-phosphopantetheine group from CoA to Ser-40.

It functions in the pathway siderophore biosynthesis; petrobactin biosynthesis. Functionally, involved in the biosynthesis of petrobactin, a catecholate siderophore that functions in both iron acquisition and virulence. Aryl-carrier protein that activates 3,4-dihydroxybenzoate (3,4-DHBA) prior to its incorporation into petrobactin. The sequence is that of Acyl carrier protein AsbD from Bacillus anthracis.